Reading from the N-terminus, the 149-residue chain is D-aminoacyl-tRNA deacylase (149 aa).

The Gly-cisPro motif, important for rejection of L-amino acids signature appears at 137–138 (GP).

The protein belongs to the DTD family. Homodimer.

The protein localises to the cytoplasm. The enzyme catalyses glycyl-tRNA(Ala) + H2O = tRNA(Ala) + glycine + H(+). It catalyses the reaction a D-aminoacyl-tRNA + H2O = a tRNA + a D-alpha-amino acid + H(+). Functionally, an aminoacyl-tRNA editing enzyme that deacylates mischarged D-aminoacyl-tRNAs. Also deacylates mischarged glycyl-tRNA(Ala), protecting cells against glycine mischarging by AlaRS. Acts via tRNA-based rather than protein-based catalysis; rejects L-amino acids rather than detecting D-amino acids in the active site. By recycling D-aminoacyl-tRNA to D-amino acids and free tRNA molecules, this enzyme counteracts the toxicity associated with the formation of D-aminoacyl-tRNA entities in vivo and helps enforce protein L-homochirality. This Clostridium botulinum (strain Kyoto / Type A2) protein is D-aminoacyl-tRNA deacylase.